The chain runs to 103 residues: Large ribosomal subunit protein bL21 (103 aa).

It belongs to the bacterial ribosomal protein bL21 family. As to quaternary structure, part of the 50S ribosomal subunit. Contacts protein L20.

Its function is as follows. This protein binds to 23S rRNA in the presence of protein L20. The protein is Large ribosomal subunit protein bL21 of Pseudomonas syringae pv. tomato (strain ATCC BAA-871 / DC3000).